The chain runs to 289 residues: Nucleotide-binding protein FRAAL4592 (289 aa).

Position 13 to 20 (13 to 20) interacts with ATP; that stretch reads GLSGAGRS. 64–67 contacts GTP; sequence DVRG.

This sequence belongs to the RapZ-like family.

Functionally, displays ATPase and GTPase activities. The polypeptide is Nucleotide-binding protein FRAAL4592 (Frankia alni (strain DSM 45986 / CECT 9034 / ACN14a)).